Here is a 370-residue protein sequence, read N- to C-terminus: tRNA pseudouridine synthase D (370 aa).

The active-site Nucleophile is the Asp-77. Residues 152–297 (GVPNYFGEQR…LEQERRPLLL (146 aa)) enclose the TRUD domain.

This sequence belongs to the pseudouridine synthase TruD family.

It carries out the reaction uridine(13) in tRNA = pseudouridine(13) in tRNA. In terms of biological role, responsible for synthesis of pseudouridine from uracil-13 in transfer RNAs. This chain is tRNA pseudouridine synthase D, found in Shewanella oneidensis (strain ATCC 700550 / JCM 31522 / CIP 106686 / LMG 19005 / NCIMB 14063 / MR-1).